Reading from the N-terminus, the 465-residue chain is ATP-dependent rRNA helicase rrp3 (465 aa).

A disordered region spans residues 1-46 (MSALKKRKITEKQPETNSDSEAESVSSRGSAKDETQTSGEEPAPAK). The span at 15 to 29 (ETNSDSEAESVSSRG) shows a compositional bias: polar residues. The short motif at 46–74 (KSFKELGIIDQLCEACENMGYKAPTPIQS) is the Q motif element. Residues 77–248 (IPLALEGRDV…RASLSNPVRV (172 aa)) form the Helicase ATP-binding domain. Residue 90–97 (AETGSGKT) coordinates ATP. The DEAD box signature appears at 196–199 (DEAD). The Helicase C-terminal domain maps to 275 to 419 (YLVYLLNEFA…EYQVEKDEVM (145 aa)). A disordered region spans residues 436-465 (MKSFDEKKGARGKKFGKGKRSRDDMDQEEG). Basic residues predominate over residues 445 to 455 (ARGKKFGKGKR).

It belongs to the DEAD box helicase family. DDX47/RRP3 subfamily. As to quaternary structure, interacts with the SSU processome.

The protein localises to the nucleus. The catalysed reaction is ATP + H2O = ADP + phosphate + H(+). ATP-dependent rRNA helicase required for pre-ribosomal RNA processing. Involved in the maturation of the 35S-pre-rRNA and to its cleavage to mature 18S rRNA. This Emericella nidulans (strain FGSC A4 / ATCC 38163 / CBS 112.46 / NRRL 194 / M139) (Aspergillus nidulans) protein is ATP-dependent rRNA helicase rrp3.